A 71-amino-acid chain; its full sequence is uncharacterized protein (71 aa).

The chain crosses the membrane as a helical span at residues 44-66 (LFFLVFRRLFSWFLVLLPSPRFF).

The protein resides in the membrane. This is an uncharacterized protein from Saccharomyces cerevisiae (strain ATCC 204508 / S288c) (Baker's yeast).